We begin with the raw amino-acid sequence, 240 residues long: MSFNVIPAIDLKGGKCVQLVQGVPGTEMVSIDDAVEVAAGWVGQGAKTLHIIDLDGAFSGSRKNAYIMEDIVSKFDVDVQVGGGIRDYETAKYLLSLGIDRVILGTAAIKNPDLVRQLADEFGSETVMVSLDSKQGEVVIEGWTESSGKTTNEMGKFFSEIGAGSILYTNVDVEGLLKGVNEDPVRSLVNSVTIPVIASGGVAKIDDLVKIKNTGAAGVVVGSALYKGLFTLREAIDKVS.

The active-site Proton acceptor is Asp10. Asp132 acts as the Proton donor in catalysis.

The protein belongs to the HisA/HisF family.

It localises to the cytoplasm. The catalysed reaction is 1-(5-phospho-beta-D-ribosyl)-5-[(5-phospho-beta-D-ribosylamino)methylideneamino]imidazole-4-carboxamide = 5-[(5-phospho-1-deoxy-D-ribulos-1-ylimino)methylamino]-1-(5-phospho-beta-D-ribosyl)imidazole-4-carboxamide. It participates in amino-acid biosynthesis; L-histidine biosynthesis; L-histidine from 5-phospho-alpha-D-ribose 1-diphosphate: step 4/9. This is 1-(5-phosphoribosyl)-5-[(5-phosphoribosylamino)methylideneamino] imidazole-4-carboxamide isomerase from Methanocella arvoryzae (strain DSM 22066 / NBRC 105507 / MRE50).